Here is a 617-residue protein sequence, read N- to C-terminus: Manganese lipoxygenase (617 aa).

An N-terminal signal peptide occupies residues 1-17; it reads MRIGLLAFAVAARYVEA. A compositionally biased stretch (low complexity) spans 23–48; the sequence is GEEVASSSAPTTLPSTSSSSALPSPT. Residues 23–59 form a disordered region; sequence GEEVASSSAPTTLPSTSSSSALPSPTKYTLPHEDPNP. N-linked (GlcNAc...) asparagine glycosylation is found at Asn109, Asn119, and Asn160. Positions 122–617 constitute a Lipoxygenase domain; sequence LRDIQSHGGL…PAVNPFFLSI (496 aa). The Mn(2+) site is built by His293, His297, His479, and Asn483. A glycan (N-linked (GlcNAc...) asparagine) is linked at Asn547. Position 617 (Ile617) interacts with Mn(2+).

It belongs to the lipoxygenase family. Manganese lipoxygenase subfamily. Requires Mn(2+) as cofactor.

The protein localises to the secreted. It carries out the reaction (9Z,12Z)-octadecadienoate + O2 = (9S)-hydroperoxy-(10E,12Z)-octadecadienoate. The catalysed reaction is (9Z,12Z)-octadecadienoate + O2 = (11S)-hydroperoxy-(9Z,12Z)-octadecadienoate. The enzyme catalyses (9Z,12Z)-octadecadienoate + O2 = (13R)-hydroperoxy-(9Z,11E)-octadecadienoate. It catalyses the reaction (9Z,12Z,15Z)-octadecatrienoate + O2 = (9S)-hydroperoxy-(10E,12Z,15Z)-octadecatrienoate. It carries out the reaction (9Z,12Z,15Z)-octadecatrienoate + O2 = (11R)-hydroperoxy-(9Z,12Z,15Z)-octadecatrienoate. The catalysed reaction is (9Z,12Z,15Z)-octadecatrienoate + O2 = (13R)-hydroperoxy-(9Z,11E,15Z)-octadecatrienoate. Lipoxygenase that metabolizes linoleic and alpha-linolenic acids to 9S-, 11- and 13R-hydroperoxy fatty acids. At the end of lipoxygenation, the intermediate products 11S-HPODE and 13R-HPODE from linoleic acid are then transformed into 9S-HPODE as the final product. The intermediate product 11R-HPOTrE from alpha-linolenic acid is transformed into 9S-HPOTrE and 13R-HPOTrE as the final products. 9S-HPOTrE is further oxidized by the enzyme to 9,16-DiHOTrE as the end product. Also acts on gamma-linolenic acid producing 9-HOTrE(n-6) as the main metabolite. The polypeptide is Manganese lipoxygenase (Nakataea oryzae (Rice stem rot fungus)).